The primary structure comprises 502 residues: ATP synthase subunit alpha (502 aa).

The tract at residues 115–135 (VDGLGPINTTNTRPIESPAPG) is disordered. 169 to 176 (GDRQTGKT) serves as a coordination point for ATP.

This sequence belongs to the ATPase alpha/beta chains family. F-type ATPases have 2 components, CF(1) - the catalytic core - and CF(0) - the membrane proton channel. CF(1) has five subunits: alpha(3), beta(3), gamma(1), delta(1), epsilon(1). CF(0) has three main subunits: a(1), b(2) and c(9-12). The alpha and beta chains form an alternating ring which encloses part of the gamma chain. CF(1) is attached to CF(0) by a central stalk formed by the gamma and epsilon chains, while a peripheral stalk is formed by the delta and b chains.

Its subcellular location is the cell membrane. It catalyses the reaction ATP + H2O + 4 H(+)(in) = ADP + phosphate + 5 H(+)(out). In terms of biological role, produces ATP from ADP in the presence of a proton gradient across the membrane. The alpha chain is a regulatory subunit. The protein is ATP synthase subunit alpha of Bacillus mycoides (strain KBAB4) (Bacillus weihenstephanensis).